Reading from the N-terminus, the 64-residue chain is Small ribosomal subunit protein bS21 (64 aa).

The protein belongs to the bacterial ribosomal protein bS21 family.

The polypeptide is Small ribosomal subunit protein bS21 (Anaeromyxobacter dehalogenans (strain 2CP-1 / ATCC BAA-258)).